Here is a 512-residue protein sequence, read N- to C-terminus: Protein disulfide-isomerase (512 aa).

Residues 1–24 form the signal peptide; the sequence is MAKNVAIFGLLFSLLLLVPSQIFA. Positions 25–144 constitute a Thioredoxin 1 domain; sequence EESSTDAKEF…IVEYLKKQSG (120 aa). Residues C62 and C65 each act as nucleophile in the active site. A disulfide bridge links C62 with C65. N-linked (GlcNAc...) asparagine glycosylation is present at N278. The region spanning 357-485 is the Thioredoxin 2 domain; that stretch reads YKDGKVEPFV…IIEFIEKNKD (129 aa). Residues C407 and C410 each act as nucleophile in the active site. Cysteines 407 and 410 form a disulfide. Over residues 487 to 496 the composition is skewed to basic and acidic residues; that stretch reads TGAAHQEVEQ. The segment at 487-512 is disordered; the sequence is TGAAHQEVEQPKAAAQPEAEQPKDEL. The short motif at 509–512 is the Prevents secretion from ER element; the sequence is KDEL.

The protein belongs to the protein disulfide isomerase family.

The protein localises to the endoplasmic reticulum lumen. It catalyses the reaction Catalyzes the rearrangement of -S-S- bonds in proteins.. In terms of biological role, participates in the folding of proteins containing disulfide bonds, may be involved in glycosylation, prolyl hydroxylation and triglyceride transfer. The chain is Protein disulfide-isomerase (PDI) from Medicago sativa (Alfalfa).